A 414-amino-acid chain; its full sequence is Succinylornithine transaminase (414 aa).

Lysine 260 is subject to N6-(pyridoxal phosphate)lysine.

This sequence belongs to the class-III pyridoxal-phosphate-dependent aminotransferase family. AstC subfamily. Pyridoxal 5'-phosphate is required as a cofactor.

The enzyme catalyses N(2)-succinyl-L-ornithine + 2-oxoglutarate = N-succinyl-L-glutamate 5-semialdehyde + L-glutamate. It functions in the pathway amino-acid degradation; L-arginine degradation via AST pathway; L-glutamate and succinate from L-arginine: step 3/5. Its function is as follows. Catalyzes the transamination of N(2)-succinylornithine and alpha-ketoglutarate into N(2)-succinylglutamate semialdehyde and glutamate. Can also act as an acetylornithine aminotransferase. The protein is Succinylornithine transaminase of Yersinia enterocolitica serotype O:8 / biotype 1B (strain NCTC 13174 / 8081).